Consider the following 855-residue polypeptide: DNA mismatch repair protein MutS (855 aa).

Residue 613–620 (GPNMGGKS) participates in ATP binding. The tract at residues 795 to 816 (ETTSLPHEVPSQQSGKPASPMQ) is disordered. Residues 796-816 (TTSLPHEVPSQQSGKPASPMQ) are compositionally biased toward polar residues.

The protein belongs to the DNA mismatch repair MutS family.

This protein is involved in the repair of mismatches in DNA. It is possible that it carries out the mismatch recognition step. This protein has a weak ATPase activity. This chain is DNA mismatch repair protein MutS, found in Pseudomonas paraeruginosa (strain DSM 24068 / PA7) (Pseudomonas aeruginosa (strain PA7)).